The following is a 194-amino-acid chain: Fe/S biogenesis protein NfuA (194 aa).

[4Fe-4S] cluster is bound by residues Cys-152 and Cys-155.

Belongs to the NfuA family. In terms of assembly, homodimer. [4Fe-4S] cluster serves as cofactor.

In terms of biological role, involved in iron-sulfur cluster biogenesis. Binds a 4Fe-4S cluster, can transfer this cluster to apoproteins, and thereby intervenes in the maturation of Fe/S proteins. Could also act as a scaffold/chaperone for damaged Fe/S proteins. This Pseudomonas entomophila (strain L48) protein is Fe/S biogenesis protein NfuA.